A 123-amino-acid chain; its full sequence is Small ribosomal subunit protein uS12 (123 aa).

Residue D89 is modified to 3-methylthioaspartic acid. The interval 100-123 is disordered; the sequence is GSLDTSGVKDRKQGRSKYGTKRPK. Over residues 113 to 123 the composition is skewed to basic residues; it reads GRSKYGTKRPK.

It belongs to the universal ribosomal protein uS12 family. In terms of assembly, part of the 30S ribosomal subunit. Contacts proteins S8 and S17. May interact with IF1 in the 30S initiation complex.

In terms of biological role, with S4 and S5 plays an important role in translational accuracy. Interacts with and stabilizes bases of the 16S rRNA that are involved in tRNA selection in the A site and with the mRNA backbone. Located at the interface of the 30S and 50S subunits, it traverses the body of the 30S subunit contacting proteins on the other side and probably holding the rRNA structure together. The combined cluster of proteins S8, S12 and S17 appears to hold together the shoulder and platform of the 30S subunit. This Ectopseudomonas mendocina (strain ymp) (Pseudomonas mendocina) protein is Small ribosomal subunit protein uS12.